Reading from the N-terminus, the 151-residue chain is Flagellar assembly factor FliW (151 aa).

The protein belongs to the FliW family. In terms of assembly, interacts with translational regulator CsrA and flagellin(s).

The protein localises to the cytoplasm. Its function is as follows. Acts as an anti-CsrA protein, binds CsrA and prevents it from repressing translation of its target genes, one of which is flagellin. Binds to flagellin and participates in the assembly of the flagellum. The polypeptide is Flagellar assembly factor FliW (Lachnospira eligens (strain ATCC 27750 / DSM 3376 / VPI C15-48 / C15-B4) (Eubacterium eligens)).